An 800-amino-acid chain; its full sequence is Phenylalanine--tRNA ligase beta subunit (800 aa).

Residues 39 to 154 (TKDIKNLVVG…EAQVPGTDAL (116 aa)) enclose the tRNA-binding domain. A B5 domain is found at 408-483 (AFITPIDITA…RIYGYDDIPS (76 aa)). Mg(2+) contacts are provided by Asp-461, Asp-467, Glu-470, and Glu-471. Positions 708-800 (PRFPGMSRDI…ALIEQGAVIR (93 aa)) constitute an FDX-ACB domain.

It belongs to the phenylalanyl-tRNA synthetase beta subunit family. Type 1 subfamily. In terms of assembly, tetramer of two alpha and two beta subunits. It depends on Mg(2+) as a cofactor.

The protein localises to the cytoplasm. The catalysed reaction is tRNA(Phe) + L-phenylalanine + ATP = L-phenylalanyl-tRNA(Phe) + AMP + diphosphate + H(+). The sequence is that of Phenylalanine--tRNA ligase beta subunit from Staphylococcus aureus (strain USA300).